The following is a 156-amino-acid chain: ATP synthase subunit b (156 aa).

Residues 13–33 (AFIIFVWCCMKFVWPPLMAAI) form a helical membrane-spanning segment.

This sequence belongs to the ATPase B chain family. F-type ATPases have 2 components, F(1) - the catalytic core - and F(0) - the membrane proton channel. F(1) has five subunits: alpha(3), beta(3), gamma(1), delta(1), epsilon(1). F(0) has three main subunits: a(1), b(2) and c(10-14). The alpha and beta chains form an alternating ring which encloses part of the gamma chain. F(1) is attached to F(0) by a central stalk formed by the gamma and epsilon chains, while a peripheral stalk is formed by the delta and b chains.

It localises to the cell inner membrane. F(1)F(0) ATP synthase produces ATP from ADP in the presence of a proton or sodium gradient. F-type ATPases consist of two structural domains, F(1) containing the extramembraneous catalytic core and F(0) containing the membrane proton channel, linked together by a central stalk and a peripheral stalk. During catalysis, ATP synthesis in the catalytic domain of F(1) is coupled via a rotary mechanism of the central stalk subunits to proton translocation. Functionally, component of the F(0) channel, it forms part of the peripheral stalk, linking F(1) to F(0). This is ATP synthase subunit b from Aeromonas salmonicida (strain A449).